Consider the following 499-residue polypeptide: ADP,ATP carrier protein 5 (499 aa).

11 helical membrane-spanning segments follow: residues 25–45 (LGKF…QNIL), 61–81 (IAGF…VIIY), 93–113 (IFYY…FVIY), 148–168 (YIVY…LLFW), 183–203 (FYTF…FLMM), 223–243 (ITLV…CCVL), 286–306 (LWLL…VEAV), 327–347 (LYIL…NNVM), 356–376 (AVIS…LIVF), 380–400 (ILSL…VSIG), and 468–488 (SISP…IYAV).

The protein belongs to the ADP/ATP translocase tlc family.

The protein localises to the cell membrane. Its function is as follows. Provides the rickettsial cell with host ATP in exchange for rickettsial ADP. This is an obligate exchange system. This energy acquiring activity is an important component of rickettsial parasitism. In Rickettsia felis (strain ATCC VR-1525 / URRWXCal2) (Rickettsia azadi), this protein is ADP,ATP carrier protein 5 (tlcE).